Reading from the N-terminus, the 2643-residue chain is Ankyrin repeat domain-containing protein 11 (2643 aa).

Disordered regions lie at residues 1 to 90 and 128 to 170; these read MPKG…KEPV and SANS…RGET. 2 stretches are compositionally biased toward basic and acidic residues: residues 21 to 54 and 69 to 90; these read MVEKQTGKKDKDKVSLTKTPKLDRSDGGKEVRER and EQKDSDTEKQGPERKRIKKEPV. The segment covering 128–155 has biased composition (polar residues); that stretch reads SANSPVDTTPKHPSQSTVCQKGTPNSAS. Over residues 156–170 the composition is skewed to basic and acidic residues; sequence KTKDKVNKRNERGET. ANK repeat units lie at residues 167–196, 200–229, 233–262, and 266–292; these read RGETRLHRAAIRGDARRIKELISEGADVNV, AGWTALHEACNRGYYDIAKQLLAAGAEVNT, DDDTPLHDAANNGHYKVVKLLLRYGGNPQQ, and KGETPLKVANSPTMVNLLLGKGTYTSS. At Ser-276 the chain carries Phosphoserine. Residues 289 to 365 form a disordered region; it reads YTSSEESSTE…DRVPPVDDKH (77 aa). Positions 295 to 305 are enriched in acidic residues; sequence SSTESSEEEDA. Polar residues predominate over residues 309–320; the sequence is APSSSVDGNNTD. 2 stretches are compositionally biased toward basic and acidic residues: residues 322–335 and 356–365; these read EFEKGLKLKAKNPE and DRVPPVDDKH. Ser-408 bears the Phosphoserine mark. Thr-410 is modified (phosphothreonine). The residue at position 411 (Ser-411) is a Phosphoserine. Disordered stretches follow at residues 423 to 504, 517 to 651, and 727 to 805; these read GEKL…CLKG, SLSA…GQCS, and DANK…DKEK. The span at 438–451 shows a compositional bias: basic and acidic residues; that stretch reads KARESSSSRQQKEK. Basic residues predominate over residues 452 to 462; it reads NKLKKKRKKET. Over residues 463–475 the composition is skewed to basic and acidic residues; that stretch reads KGKEVRFGKRSDK. The span at 484–494 shows a compositional bias: acidic residues; that stretch reads ESSESEEDDGD. Residues 517-528 show a composition bias toward low complexity; that stretch reads SLSASSTSSHGS. Basic and acidic residues predominate over residues 537–550; the sequence is GHTDQHTKHWRTDN. Polar residues predominate over residues 557-574; it reads PAWSEVSSLSDSSRTGLT. Positions 575-588 are enriched in low complexity; it reads SESDCSSEGSSVES. Composition is skewed to basic residues over residues 591-602 and 633-646; these read PTRRKQEHRKRG and VKKHKTKHKHKHKE. Ser-838 bears the Phosphoserine mark. Composition is skewed to basic and acidic residues over residues 918–931 and 938–962; these read KNSEKRRDQTEKHK and SEKDKKRRESAEGGRDRRDGRIRSE. Disordered stretches follow at residues 918-962, 977-1037, and 1051-1074; these read KNSE…IRSE, SFKD…STLD, and EKKDGKEKHKDIHSKDRKASFDQL. Ser-1070 is modified (phosphoserine). Phosphothreonine is present on Thr-1111. At Ser-1114 the chain carries Phosphoserine. Disordered stretches follow at residues 1114-1388 and 1420-1711; these read SEDE…KDAS and LFSS…TPSC. Composition is skewed to basic and acidic residues over residues 1133–1297, 1326–1343, 1355–1388, 1420–1444, 1464–1535, 1546–1564, 1577–1587, and 1595–1640; these read DTQR…DKIS, AEDKARDSACLSEKLREK, KSHERERAKKEKAEKKEKSEDYKDSISSVRKDAS, LFSSEKKDRSDPEREPAKRIEKELK, RERW…KGDS, VPSRDSGKKDSRPREKLLG, LSQKDLEIEER, and MKQM…KVKE. Ser-1676 bears the Phosphoserine mark. Over residues 1678–1695 the composition is skewed to polar residues; it reads RTEQSRPTGVPTPTSVVS. Residues Ser-1777 and Ser-1832 each carry the phosphoserine modification. 2 positions are modified to phosphotyrosine: Tyr-1835 and Tyr-1836. 2 positions are modified to phosphoserine: Ser-1837 and Ser-1844. Disordered regions lie at residues 1863-1900, 1981-2027, and 2111-2386; these read PPDSVFSNLPPKSSPSPRGELLSPAIEGTLPPDLGLPL, SPKH…EVKD, and HEAF…STQQ. Phosphoserine is present on residues Ser-1981 and Ser-2139. Pro residues-rich tracts occupy residues 2150-2160 and 2175-2184; these read PVPPAESPPGP and EEPPAPPPQE. A compositionally biased stretch (low complexity) spans 2273–2284; it reads SAEASCVVAAAE. Residues 2297 to 2315 show a composition bias toward basic and acidic residues; the sequence is PEPKPTSEVPKAPKVEEVP. An important for protein degradation region spans residues 2349–2643; the sequence is AKGRASEEED…VNDDFVLLPA (295 aa). Residues 2371-2386 are compositionally biased toward low complexity; it reads RSSQQLQQQLNTSTQQ.

Interacts with the PAS region of the p160 coactivators. Post-translationally, subject to proteasomal degradation which is probably essential to regulate its activity.

The protein resides in the nucleus. Functionally, chromatin regulator which modulates histone acetylation and gene expression in neural precursor cells. May recruit histone deacetylases (HDACs) to the p160 coactivators/nuclear receptor complex to inhibit ligand-dependent transactivation. Has a role in proliferation and development of cortical neural precursors. May also regulate bone homeostasis. This Mus musculus (Mouse) protein is Ankyrin repeat domain-containing protein 11.